We begin with the raw amino-acid sequence, 856 residues long: DNA endonuclease RBBP8 (856 aa).

An essential for binding to the MRN complex and for RPA focus formation on DNA damage region spans residues 25–48 (ELWSKLKECHDKDLQELLMKIGKL). Coiled-coil stretches lie at residues 38–87 (LQEL…EDRL) and 120–141 (ITEL…SEQL). Disordered regions lie at residues 143–174 (DMQK…DSPL) and 423–456 (DSEQ…DKEN). A compositionally biased stretch (acidic residues) spans 156–168 (ENPADTGDGEDGV). The segment at 493–515 (SSSRTKLTISLVPEKPDTKTILH) is damage-recruitment motif. The disordered stretch occupies residues 695–732 (SPSQSISCKERSDIPSIENKKITSEKEHESKGEPYQKQ). The span at 702 to 730 (CKERSDIPSIENKKITSEKEHESKGEPYQ) shows a compositional bias: basic and acidic residues. Phosphothreonine is present on Thr806. A Phosphothreonine; by ATR modification is found at Thr818.

Belongs to the COM1/SAE2/CtIP family. In terms of assembly, homotetramer; formed by antiparallel association of helical extensions protruding from the N-termini of two parallel coiled-coil dimers. Interacts with the MRN complex; the interaction links DNA sensing to resection. Interacts with samhd1. Phosphorylation at Thr-818 by atr promotes recruitment to double-strand breaks (DSBs).

Its subcellular location is the nucleus. The protein localises to the chromosome. Endonuclease that cooperates with the MRE11-RAD50-NBN (MRN) complex in DNA-end resection, the first step of double-strand break (DSB) repair through the homologous recombination (HR) pathway. Functions downstream of the MRN complex and ATM, promotes ATR activation and its recruitment to DSBs in the S/G2 phase facilitating the generation of ssDNA. Specifically promotes the endonuclease activity of the MRN complex to clear DNA ends containing protein adducts: recruited to DSBs by nbn following phosphorylation, and promotes the endonuclease of mre11 to clear protein-DNA adducts and generate clean double-strand break ends. The MRN complex and rbbp8/CtIP are also required for chromosome alignment during metaphase. The sequence is that of DNA endonuclease RBBP8 (rbbp8) from Xenopus laevis (African clawed frog).